A 394-amino-acid chain; its full sequence is Ceramide glucosyltransferase-B (394 aa).

Over 1–10 the chain is Lumenal; it reads MAVLDLALQG. A helical membrane pass occupies residues 11–32; sequence LAIFGCILFFVLWFMHFLSIVY. Residues 33 to 195 are Cytoplasmic-facing; sequence TRLHLNKKVS…QVYFGTSHPR (163 aa). A short sequence motif (D1) is located at residue Asp92. A short sequence motif (D2) is located at residue Asp144. Residues 196–215 form a helical membrane-spanning segment; it reads SYISANVTGIKCVTGMSCLM. The Lumenal segment spans residues 216 to 287; sequence RKEVLDQAGG…KLRINMLPAT (72 aa). Asp236 is a short sequence motif (D3). Residue Asp236 is the Proton acceptor of the active site. A (Q/R)XXRW motif is present at residues 272–276; the sequence is RMIRW. The helical transmembrane segment at 288–304 threads the bilayer; the sequence is IICEPISECFVASLIIG. Over 305–309 the chain is Cytoplasmic; sequence WAAHH. The chain crosses the membrane as a helical span at residues 310–328; that stretch reads IFRWDIMVFFMCHCLAWFI. The Lumenal portion of the chain corresponds to 329–348; it reads FDYIQLRGVQGGPLNFSKLD. Residues 349–369 form a helical membrane-spanning segment; it reads YAVAWFIRESMTIYIFLSALW. Residues 370–394 lie on the Cytoplasmic side of the membrane; it reads DPTISWRTGRYRLRCGGTAEEILDV.

The protein belongs to the glycosyltransferase 2 family.

It is found in the golgi apparatus membrane. The enzyme catalyses an N-acylsphing-4-enine + UDP-alpha-D-glucose = a beta-D-glucosyl-(1&lt;-&gt;1')-N-acylsphing-4-enine + UDP + H(+). It catalyses the reaction UDP-alpha-D-xylose + an N-acylsphing-4-enine = a beta-D-xylosyl-(1&lt;-&gt;1')-N-acylsphing-4-enine + UDP + H(+). The catalysed reaction is N-(9Z-octadecenoyl)-sphing-4-enine + UDP-alpha-D-xylose = beta-D-xylosyl-(1&lt;-&gt;1')-N-(9Z-octadecenoyl)-sphing-4-enine + UDP + H(+). It functions in the pathway lipid metabolism; sphingolipid metabolism. Participates in the initial step of the glucosylceramide-based glycosphingolipid/GSL synthetic pathway at the cytosolic surface of the Golgi. Catalyzes the transfer of glucose from UDP-glucose to ceramide to produce glucosylceramide/GlcCer (such as beta-D-glucosyl-(1&lt;-&gt;1')-N-acylsphing-4-enine). Glucosylceramide is the core component of glycosphingolipids/GSLs, amphipathic molecules consisting of a ceramide lipid moiety embedded in the outer leaflet of the membrane, linked to one of hundreds of different externally oriented oligosaccharide structures. Glycosphingolipids are essential components of membrane microdomains that mediate membrane trafficking and signal transduction. They are implicated in many fundamental cellular processes, including growth, differentiation, migration, morphogenesis, cell-to-cell and cell-to-matrix interactions. Catalyzes the synthesis of xylosylceramide/XylCer (such as beta-D-xylosyl-(1&lt;-&gt;1')-N-acylsphing-4-enine) using UDP-Xyl as xylose donor. The protein is Ceramide glucosyltransferase-B (ugcg-b) of Xenopus laevis (African clawed frog).